The chain runs to 479 residues: MAKEKKLVEAITSMEEDFTQWYTDVVKKAELMDYSSVKGCMIFKPNGYAIWENIQKNLDAMFKETGVENVYMPMFIPESLLQKEKDHVEGFAPEVAWVTQGGLETLQERLAVRPTSETLFCELFSKTVQSHRDLPKVYNQWCSVVRWEKTTRPFLRSSEFLWQEGHTVHATAEEAEARTVQMLNIYADFCEKYLAIPMVKGRKTDKEKFAGAEATYTIEALMHDGKALQSGTSHNFGDGFPKAFGIQYTDKDNKLQYCHETSWGVSTRLIGAIIMVHGDDSGLVLPPKIAPTQVMVIPIQQQKDGVLDKAYDLKDKLSKDFRVKIDATDKTPGWKFAAQEVQGISTRIEIGPKDIEKNQCVIVRRDTREKIVVSLDEVNEKLAEVLETMQNDMLEKAKAFLASHINDAHDYNEFKAIAETKPGFIRAMWCGDEACENKIKEDTTVTSRCMPFGDQEQISDVCVCCGKPAHKLVYWGKAY.

This sequence belongs to the class-II aminoacyl-tRNA synthetase family. ProS type 3 subfamily. In terms of assembly, homodimer.

It localises to the cytoplasm. The enzyme catalyses tRNA(Pro) + L-proline + ATP = L-prolyl-tRNA(Pro) + AMP + diphosphate. Catalyzes the attachment of proline to tRNA(Pro) in a two-step reaction: proline is first activated by ATP to form Pro-AMP and then transferred to the acceptor end of tRNA(Pro). This Agathobacter rectalis (strain ATCC 33656 / DSM 3377 / JCM 17463 / KCTC 5835 / VPI 0990) (Eubacterium rectale) protein is Proline--tRNA ligase.